Here is a 513-residue protein sequence, read N- to C-terminus: 2,3-bisphosphoglycerate-independent phosphoglycerate mutase (513 aa).

Mn(2+) is bound by residues Asp-15 and Ser-65. The active-site Phosphoserine intermediate is the Ser-65. Substrate is bound by residues His-126, 156–157 (RD), Arg-188, Arg-194, 263–266 (RADR), and Lys-337. The Mn(2+) site is built by Asp-402, His-406, Asp-443, His-444, and His-461.

The protein belongs to the BPG-independent phosphoglycerate mutase family. In terms of assembly, monomer. It depends on Mn(2+) as a cofactor.

The catalysed reaction is (2R)-2-phosphoglycerate = (2R)-3-phosphoglycerate. Its pathway is carbohydrate degradation; glycolysis; pyruvate from D-glyceraldehyde 3-phosphate: step 3/5. Catalyzes the interconversion of 2-phosphoglycerate and 3-phosphoglycerate. The polypeptide is 2,3-bisphosphoglycerate-independent phosphoglycerate mutase (Moorella thermoacetica (strain ATCC 39073 / JCM 9320)).